The chain runs to 203 residues: SOSS complex subunit B1-A (203 aa).

A DNA-binding region (OB) is located at residues 22–92; sequence IVLETGRVTK…TLYTGRGGDL (71 aa). The interval 110–203 is disordered; it reads EPNPEYIAQQ…GKESRRTGKR (94 aa). Residues 118–140 are compositionally biased toward low complexity; sequence QQSQSKQGQQESGTGTNNHNSSS. A compositionally biased stretch (polar residues) spans 149-182; that stretch reads ENGNGSNSSGPPAHQSTAPAHSASGRITRSQPNH.

Belongs to the SOSS-B family. SOSS-B1 subfamily. In terms of assembly, component of the SOSS complex, composed of soss-b (soss-b1/nabp2 or soss-b2/nabp1), soss-a/ints3 and soss-c/inip. SOSS complexes containing soss-b1/nabp2 are more abundant than complexes containing soss-b2/nabp1.

It is found in the nucleus. Component of the SOSS complex, a multiprotein complex that functions downstream of the MRN complex to promote DNA repair and G2/M checkpoint. In the SOSS complex, acts as a sensor of single-stranded DNA that binds to single-stranded DNA. The SOSS complex associates with DNA lesions and influences diverse endpoints in the cellular DNA damage response including cell-cycle checkpoint activation, recombinational repair and maintenance of genomic stability. Required for efficient homologous recombination-dependent repair of double-strand breaks (DSBs). This is SOSS complex subunit B1-A (nabp2-a) from Xenopus laevis (African clawed frog).